The chain runs to 413 residues: 3-isopropylmalate dehydratase large subunit (413 aa).

Cys-295, Cys-353, and Cys-356 together coordinate [4Fe-4S] cluster.

This sequence belongs to the aconitase/IPM isomerase family. LeuC type 2 subfamily. As to quaternary structure, heterodimer of LeuC and LeuD. Requires [4Fe-4S] cluster as cofactor.

It catalyses the reaction (2R,3S)-3-isopropylmalate = (2S)-2-isopropylmalate. The protein operates within amino-acid biosynthesis; L-leucine biosynthesis; L-leucine from 3-methyl-2-oxobutanoate: step 2/4. Functionally, catalyzes the isomerization between 2-isopropylmalate and 3-isopropylmalate, via the formation of 2-isopropylmaleate. This Pyrobaculum calidifontis (strain DSM 21063 / JCM 11548 / VA1) protein is 3-isopropylmalate dehydratase large subunit.